Reading from the N-terminus, the 430-residue chain is C4-dicarboxylate transport protein (430 aa).

A run of 9 helical transmembrane segments spans residues 8 to 28 (SLYFQVLAAITIGILLGHFYP), 44 to 64 (LIKMIIAPVIFCTVVTGIAGM), 76 to 96 (AALLYFEVVSTIALIIGLVVV), 144 to 164 (AFASGNILQVLLFAVMFGFAL), 184 to 204 (VIFGVINMIMKLAPLGAFGAM), 222 to 242 (LILCFYLTCILFVFLVLGSIA), 289 to 309 (VVGLVIPTGYSFNLDGTSIYL), 326 to 346 (IWHQITLLVVLLLSSKGAAGV), and 352 to 372 (IVLAATLSAVGHLPVAGLALI).

This sequence belongs to the dicarboxylate/amino acid:cation symporter (DAACS) (TC 2.A.23) family.

It localises to the cell inner membrane. Functionally, responsible for the transport of dicarboxylates such as succinate, fumarate, and malate from the periplasm across the membrane. The protein is C4-dicarboxylate transport protein of Pectobacterium atrosepticum (strain SCRI 1043 / ATCC BAA-672) (Erwinia carotovora subsp. atroseptica).